A 102-amino-acid polypeptide reads, in one-letter code: uncharacterized protein (102 aa).

Residues 1–41 (MAAPRQIAFYGKGGTGKPKRKPEPVTASKEDRCLGSPSKNK) form a disordered region.

The protein to the N-terminal of nitrogenase iron protein (NifH). Has lost the ATP-binding site.

Its function is as follows. This protein is either not expressed, expressed at low levels or rapidly degraded. This is an uncharacterized protein from Rhizobium meliloti (Ensifer meliloti).